The following is a 206-amino-acid chain: MSFLNIFTFFSVLVSVATAVRFDLTNVTCNNLHGPHCGTYVMEVVGQNGTFLGQSTFAGADVLTESAGDAWARYLGQETRFLPKLTTIASNDTKNFSPLIFTTNIYTCNPQSFGDAMVPFANTVTGEIEYNSWADTADNASFITGLANQLFNSTQYGVQVASCYPNFASVILSTPTVNIFAANETLPDYCTAIQLKAVCPPDAGFA.

An N-terminal signal peptide occupies residues 1-19 (MSFLNIFTFFSVLVSVATA).

Belongs to the VEL1 family.

It localises to the cytoplasm. The protein localises to the cytosol. In Saccharomyces cerevisiae (strain YJM789) (Baker's yeast), this protein is VEL1-related protein SCY_5430.